The primary structure comprises 125 residues: Photoactive yellow protein (125 aa).

The region spanning 23-86 (IDDLAFGAIQ…GRFREGVANG (64 aa)) is the PAS domain. Cysteine 69 is modified (S-(4-hydroxycinnamyl)cysteine).

This sequence belongs to the photoactive yellow protein family. Post-translationally, the 4-hydroxycinnamic acid (p-coumaric acid) chromophore is covalently bound via a thioester linkage.

In terms of biological role, this photoactive protein is a photoreceptor with kinetics similar to that of rhodopsin. In Rhodothalassium salexigens (Rhodospirillum salexigens), this protein is Photoactive yellow protein (pyp).